A 120-amino-acid chain; its full sequence is NAD(P)H-quinone oxidoreductase subunit 3, organellar chromatophore (120 aa).

Transmembrane regions (helical) follow at residues 6–26 (GYDAFLGFLLIATAVPVLALL), 64–84 (MFALVFVIFDVETVFLYPWAV), and 89–109 (LGLLAFIEALIFIAILVIALA).

Belongs to the complex I subunit 3 family. As to quaternary structure, NDH is composed of at least 16 different subunits, 5 of which are encoded in the nucleus.

It is found in the plastid. It localises to the organellar chromatophore thylakoid membrane. The enzyme catalyses a plastoquinone + NADH + (n+1) H(+)(in) = a plastoquinol + NAD(+) + n H(+)(out). It catalyses the reaction a plastoquinone + NADPH + (n+1) H(+)(in) = a plastoquinol + NADP(+) + n H(+)(out). NDH shuttles electrons from NAD(P)H:plastoquinone, via FMN and iron-sulfur (Fe-S) centers, to quinones in the photosynthetic chain and possibly in a chloroplast respiratory chain. The immediate electron acceptor for the enzyme in this species is believed to be plastoquinone. Couples the redox reaction to proton translocation, and thus conserves the redox energy in a proton gradient. The sequence is that of NAD(P)H-quinone oxidoreductase subunit 3, organellar chromatophore from Paulinella chromatophora.